An 80-amino-acid chain; its full sequence is MPKKTQQSVSFEASLQQLEQIVSRLESGDLALEEALNEFERGVQLARAGQQVLQQAEQRVQILLSDDKNAELTPFTPEKE.

Belongs to the XseB family. Heterooligomer composed of large and small subunits.

The protein localises to the cytoplasm. It catalyses the reaction Exonucleolytic cleavage in either 5'- to 3'- or 3'- to 5'-direction to yield nucleoside 5'-phosphates.. In terms of biological role, bidirectionally degrades single-stranded DNA into large acid-insoluble oligonucleotides, which are then degraded further into small acid-soluble oligonucleotides. This chain is Exodeoxyribonuclease 7 small subunit, found in Erwinia tasmaniensis (strain DSM 17950 / CFBP 7177 / CIP 109463 / NCPPB 4357 / Et1/99).